The following is a 179-amino-acid chain: Cytochrome c-type biogenesis protein CcmE (179 aa).

The Cytoplasmic segment spans residues 1–8; it reads MTPRRKSR. Residues 9–29 form a helical; Signal-anchor for type II membrane protein membrane-spanning segment; the sequence is MTVILFVLLGISIASALVLYA. Topologically, residues 30 to 179 are periplasmic; that stretch reads LRQNIDLFYT…QKTSMQEGQK (150 aa). Heme contacts are provided by H131 and Y135. The segment at 151 to 179 is disordered; sequence MGVADLKGESERDRQEKAYQKTSMQEGQK. Over residues 156–169 the composition is skewed to basic and acidic residues; the sequence is LKGESERDRQEKAY. The span at 170 to 179 shows a compositional bias: polar residues; it reads QKTSMQEGQK.

The protein belongs to the CcmE/CycJ family.

It is found in the cell inner membrane. In terms of biological role, heme chaperone required for the biogenesis of c-type cytochromes. Transiently binds heme delivered by CcmC and transfers the heme to apo-cytochromes in a process facilitated by CcmF and CcmH. In Pasteurella multocida (strain Pm70), this protein is Cytochrome c-type biogenesis protein CcmE.